The sequence spans 274 residues: 2,3,4,5-tetrahydropyridine-2,6-dicarboxylate N-succinyltransferase (274 aa).

Positions 104 and 141 each coordinate substrate.

Belongs to the transferase hexapeptide repeat family. As to quaternary structure, homotrimer.

It localises to the cytoplasm. It catalyses the reaction (S)-2,3,4,5-tetrahydrodipicolinate + succinyl-CoA + H2O = (S)-2-succinylamino-6-oxoheptanedioate + CoA. It participates in amino-acid biosynthesis; L-lysine biosynthesis via DAP pathway; LL-2,6-diaminopimelate from (S)-tetrahydrodipicolinate (succinylase route): step 1/3. The polypeptide is 2,3,4,5-tetrahydropyridine-2,6-dicarboxylate N-succinyltransferase (Salmonella choleraesuis (strain SC-B67)).